We begin with the raw amino-acid sequence, 176 residues long: Large ribosomal subunit protein uL15 (176 aa).

Residues 1-13 (MKLNDLRDNEGAR) show a composition bias toward basic and acidic residues. 2 disordered regions span residues 1–48 (MKLN…AIKG) and 151–176 (IPAA…AKAE). A compositionally biased stretch (gly residues) spans 21–35 (RGIGSGKGKTGGRGQ). The segment covering 156–176 (PEHEKKAARSEANKKAKAKAE) has biased composition (basic and acidic residues).

This sequence belongs to the universal ribosomal protein uL15 family. Part of the 50S ribosomal subunit.

Its function is as follows. Binds to the 23S rRNA. The sequence is that of Large ribosomal subunit protein uL15 from Erythrobacter litoralis (strain HTCC2594).